The sequence spans 146 residues: Spermidine export protein MdtJ (146 aa).

The next 4 helical transmembrane spans lie at 1-21 (MIYW…TLSM), 31-51 (TGMI…AIAV), 54-74 (VALG…ITTF), and 76-96 (VLWF…MLIA).

Belongs to the drug/metabolite transporter (DMT) superfamily. Small multidrug resistance (SMR) (TC 2.A.7.1) family. MdtJ subfamily. As to quaternary structure, forms a complex with MdtI.

It is found in the cell inner membrane. In terms of biological role, catalyzes the excretion of spermidine. This chain is Spermidine export protein MdtJ, found in Proteus mirabilis (strain HI4320).